The sequence spans 355 residues: NADH-quinone oxidoreductase subunit H (355 aa).

The next 8 membrane-spanning stretches (helical) occupy residues 25–45, 91–111, 126–146, 170–190, 205–225, 253–273, 290–310, and 330–350; these read IVRILVVAVVILLCVAYLILW, WLYLIAPVMTVVPAFAVWAVI, LLYAMAISSIGVYAVILAGWA, MGFALVLVLMTAGSLNLSEIV, FLSWNWLPLLPAFVVYFVSGI, MAFALFFLAEYINMIVISALA, FIPGVFWLVLKVFALLSVFIW, and VFLPVTVIWVVVVGFWMMSPL.

This sequence belongs to the complex I subunit 1 family. As to quaternary structure, NDH-1 is composed of 14 different subunits. Subunits NuoA, H, J, K, L, M, N constitute the membrane sector of the complex.

Its subcellular location is the cell inner membrane. It catalyses the reaction a quinone + NADH + 5 H(+)(in) = a quinol + NAD(+) + 4 H(+)(out). In terms of biological role, NDH-1 shuttles electrons from NADH, via FMN and iron-sulfur (Fe-S) centers, to quinones in the respiratory chain. The immediate electron acceptor for the enzyme in this species is believed to be ubiquinone. Couples the redox reaction to proton translocation (for every two electrons transferred, four hydrogen ions are translocated across the cytoplasmic membrane), and thus conserves the redox energy in a proton gradient. This subunit may bind ubiquinone. The protein is NADH-quinone oxidoreductase subunit H of Burkholderia ambifaria (strain MC40-6).